A 62-amino-acid polypeptide reads, in one-letter code: Pro-MCH variant (62 aa).

The tract at residues 23-41 (GSVAFPAENGVQDTESTQE) is NGE-like. Residues 29–62 (AENGVQDTESTQEKRETGDEENSAKFPIGRRDFD) form a disordered region. The tract at residues 44-56 (ETGDEENSAKFPI) is NEI-like. Residues 60 to 62 (DFD) form a melanin-concentrating hormone-like region.

The protein belongs to the melanin-concentrating hormone family.

The sequence is that of Pro-MCH variant (PMCHL1) from Pan paniscus (Pygmy chimpanzee).